We begin with the raw amino-acid sequence, 333 residues long: MKFIDQTIIQVIAGNGGNGCVNFRREKYIPKGGPDGGDGGDGGNVWLQSDNNLNTLIDLRFKKTFQAPHGENGSGKNCSGKKGSDIKIYVPVGTKIINYQTREIIGDLIKHKQKILIAKGGWHGLGNTRFKSSINRTPRQRTLGSVGEKRDIQLELILIADVGTLGMPNAGKSTLVKSISGAKTKIANYPFTTLNPVLGSVNTEGKKFIIADIPGIMQNASQGFGLGVRFLKHLERCKILLHIVDLCPTDHSNPVENIRIILNELKKYNTSLYNKPRWLILNKIDLIKSSEIKKIIDKIKNFLKVEERFYLISSIKKIGVKKLCSDIAFYLQK.

Residues 1–159 (MKFIDQTIIQ…RDIQLELILI (159 aa)) form the Obg domain. Positions 160–332 (ADVGTLGMPN…LCSDIAFYLQ (173 aa)) constitute an OBG-type G domain. GTP-binding positions include 166–173 (GMPNAGKS), 191–195 (FTTLN), 212–215 (DIPG), 282–285 (NKID), and 313–315 (SSI). Residues serine 173 and threonine 193 each contribute to the Mg(2+) site.

Belongs to the TRAFAC class OBG-HflX-like GTPase superfamily. OBG GTPase family. Monomer. The cofactor is Mg(2+).

It is found in the cytoplasm. An essential GTPase which binds GTP, GDP and possibly (p)ppGpp with moderate affinity, with high nucleotide exchange rates and a fairly low GTP hydrolysis rate. Plays a role in control of the cell cycle, stress response, ribosome biogenesis and in those bacteria that undergo differentiation, in morphogenesis control. This chain is GTPase Obg, found in Buchnera aphidicola subsp. Schizaphis graminum (strain Sg).